A 31-amino-acid polypeptide reads, in one-letter code: Cyclotide psybry B (31 aa).

The segment at residues 1 to 31 (GFNPCGETCWNKPTCHAPGCTCSIANICVRN) is a cross-link (cyclopeptide (Gly-Asn)). Cystine bridges form between cysteine 5/cysteine 20, cysteine 9/cysteine 22, and cysteine 15/cysteine 28.

In terms of processing, this is a cyclic peptide.

Functionally, probably participates in a plant defense mechanism. This chain is Cyclotide psybry B, found in Psychotria brachyceras.